A 235-amino-acid polypeptide reads, in one-letter code: Protein MAINTENANCE OF PSII UNDER HIGH LIGHT 1 (235 aa).

The chain crosses the membrane as a helical span at residues 127–147 (TAAIVAGIALIAVAAASSILL). Residues 181-235 (QPSTPSVTEAPPVAELETSLPETPSVAQQETSLPETMASEAQPEASSVPTTSSTS) form a disordered region. Polar residues-rich tracts occupy residues 200–214 (LPETPSVAQQETSLP) and 224–235 (EASSVPTTSSTS).

Interacts with psbA, psbB, psbC and psbD.

It localises to the plastid. It is found in the chloroplast thylakoid membrane. Its function is as follows. Interacts with photosystem II (PSII) core complexes and participates in the maintenance of normal PSII activity under photoinhibitory stress. May protect against photodamage or stabilize PSII under high-light stress. Participates in the maintainance of proper PSII function under high-light stress by protecting PSII from photooxidative damage. In Arabidopsis thaliana (Mouse-ear cress), this protein is Protein MAINTENANCE OF PSII UNDER HIGH LIGHT 1.